Here is an 84-residue protein sequence, read N- to C-terminus: MDAHTIIVAATAIAVGIIFGAAGLGSAIGWGLITSKTIEGITRQPEMRPQLLVNTFIFAGLMESFPFIILAFGFWFLFANPFLG.

2 helical membrane passes run isoleucine 13 to isoleucine 33 and phenylalanine 56 to phenylalanine 76.

It belongs to the ATPase C chain family. F-type ATPases have 2 components, F(1) - the catalytic core - and F(0) - the membrane proton channel. F(1) has five subunits: alpha(3), beta(3), gamma(1), delta(1), epsilon(1). F(0) has three main subunits: a(1), b(2) and c(10-14). The alpha and beta chains form an alternating ring which encloses part of the gamma chain. F(1) is attached to F(0) by a central stalk formed by the gamma and epsilon chains, while a peripheral stalk is formed by the delta and b chains.

Its subcellular location is the cell inner membrane. Functionally, f(1)F(0) ATP synthase produces ATP from ADP in the presence of a proton or sodium gradient. F-type ATPases consist of two structural domains, F(1) containing the extramembraneous catalytic core and F(0) containing the membrane proton channel, linked together by a central stalk and a peripheral stalk. During catalysis, ATP synthesis in the catalytic domain of F(1) is coupled via a rotary mechanism of the central stalk subunits to proton translocation. Key component of the F(0) channel; it plays a direct role in translocation across the membrane. A homomeric c-ring of between 10-14 subunits forms the central stalk rotor element with the F(1) delta and epsilon subunits. This Acidithiobacillus ferrooxidans (strain ATCC 23270 / DSM 14882 / CIP 104768 / NCIMB 8455) (Ferrobacillus ferrooxidans (strain ATCC 23270)) protein is ATP synthase subunit c.